A 336-amino-acid polypeptide reads, in one-letter code: Nucleoid-associated protein Spro_3255 (336 aa).

Belongs to the YejK family.

It is found in the cytoplasm. The protein localises to the nucleoid. The protein is Nucleoid-associated protein Spro_3255 of Serratia proteamaculans (strain 568).